A 269-amino-acid polypeptide reads, in one-letter code: Undecaprenyl-diphosphatase (269 aa).

The next 8 helical transmembrane spans lie at 1–21, 40–59, 87–107, 117–137, 147–166, 188–208, 220–240, and 248–268; these read MDIM…ILPI, GLTF…CVYF, FFII…EKPI, LIAL…TTGP, LRGA…PGVS, FSFL…MGEL, PLLA…ALLL, and LYPF…YLFA.

This sequence belongs to the UppP family.

The protein localises to the cell inner membrane. The catalysed reaction is di-trans,octa-cis-undecaprenyl diphosphate + H2O = di-trans,octa-cis-undecaprenyl phosphate + phosphate + H(+). Catalyzes the dephosphorylation of undecaprenyl diphosphate (UPP). Confers resistance to bacitracin. The protein is Undecaprenyl-diphosphatase of Geobacter sulfurreducens (strain ATCC 51573 / DSM 12127 / PCA).